The primary structure comprises 193 residues: Selenoprotein S A (193 aa).

The helical transmembrane segment at 29 to 49 threads the bilayer; sequence WALASYGWYILFGCIILYFLI. Basic and acidic residues predominate over residues 114–125; that stretch reads IETWDRMQEGKS. Residues 114-193 form a disordered region; sequence IETWDRMQEG…RRGPSSGGUG (80 aa). Residues 137–153 are compositionally biased toward low complexity; the sequence is SPSTSASSSPSTSSSAP. Position 192 (Sec-192) is a non-standard amino acid, selenocysteine.

Belongs to the selenoprotein S family.

The protein resides in the endoplasmic reticulum membrane. Its subcellular location is the cytoplasm. In terms of biological role, involved in the degradation process of misfolded endoplasmic reticulum (ER) luminal proteins. Participates in the transfer of misfolded proteins from the ER to the cytosol, where they are destroyed by the proteasome in a ubiquitin-dependent manner. This Xenopus laevis (African clawed frog) protein is Selenoprotein S A (vimp-a).